The primary structure comprises 342 residues: Dihydroorotase (342 aa).

Residues His-13 and His-15 each coordinate Zn(2+). Substrate contacts are provided by residues 15-17 and Asn-41; that span reads HLR. Lys-98, His-135, and His-173 together coordinate Zn(2+). Lys-98 carries the post-translational modification N6-carboxylysine. Substrate is bound at residue His-135. A substrate-binding site is contributed by Leu-218. Residue Asp-246 participates in Zn(2+) binding. Residue Asp-246 is part of the active site. Positions 250 and 262 each coordinate substrate.

The protein belongs to the metallo-dependent hydrolases superfamily. DHOase family. Class II DHOase subfamily. In terms of assembly, homodimer. Requires Zn(2+) as cofactor.

The catalysed reaction is (S)-dihydroorotate + H2O = N-carbamoyl-L-aspartate + H(+). Its pathway is pyrimidine metabolism; UMP biosynthesis via de novo pathway; (S)-dihydroorotate from bicarbonate: step 3/3. In terms of biological role, catalyzes the reversible cyclization of carbamoyl aspartate to dihydroorotate. In Photobacterium profundum (strain SS9), this protein is Dihydroorotase.